A 258-amino-acid polypeptide reads, in one-letter code: Thiazole synthase (258 aa).

Lys-97 acts as the Schiff-base intermediate with DXP in catalysis. 1-deoxy-D-xylulose 5-phosphate-binding positions include Gly-158, 184-185 (AG), and 206-207 (NT).

This sequence belongs to the ThiG family. In terms of assembly, homotetramer. Forms heterodimers with either ThiH or ThiS.

It is found in the cytoplasm. The enzyme catalyses [ThiS sulfur-carrier protein]-C-terminal-Gly-aminoethanethioate + 2-iminoacetate + 1-deoxy-D-xylulose 5-phosphate = [ThiS sulfur-carrier protein]-C-terminal Gly-Gly + 2-[(2R,5Z)-2-carboxy-4-methylthiazol-5(2H)-ylidene]ethyl phosphate + 2 H2O + H(+). It functions in the pathway cofactor biosynthesis; thiamine diphosphate biosynthesis. In terms of biological role, catalyzes the rearrangement of 1-deoxy-D-xylulose 5-phosphate (DXP) to produce the thiazole phosphate moiety of thiamine. Sulfur is provided by the thiocarboxylate moiety of the carrier protein ThiS. In vitro, sulfur can be provided by H(2)S. The chain is Thiazole synthase from Bacteroides fragilis (strain ATCC 25285 / DSM 2151 / CCUG 4856 / JCM 11019 / LMG 10263 / NCTC 9343 / Onslow / VPI 2553 / EN-2).